The following is a 213-amino-acid chain: Heterochromatin protein 1 (213 aa).

Disordered regions lie at residues 1–24 (MGKKTDNPETNNASSGAEEEEEEY) and 74–151 (RKDE…TGFD). The region spanning 24 to 82 (YAVEKILDRRVRKGKVEYYLKWKGYAETENTWEPEGNLDCQDLIQQYELSRKDEANAAA) is the Chromo 1 domain. The span at 89 to 104 (SKKERPGSSTKVKETG) shows a compositional bias: basic and acidic residues. A compositionally biased stretch (polar residues) spans 105–115 (RTSTTASNSSG). The Chromo 2 domain occupies 154-212 (LEAEKILGASDNNGRLTFLIQFKGVDQAEMVPSTVANVKIPQMVIRFYEERLSWYSDNE).

The protein localises to the nucleus. Functionally, structural component of heterochromatin, involved in gene repression and the modification of position-effect-variegation. Recognizes and binds histone H3 tails methylated at 'Lys-9', leading to epigenetic repression. This is Heterochromatin protein 1 (HP1A) from Drosophila virilis (Fruit fly).